The primary structure comprises 282 residues: MIVSGLSGSGKSVALKTFEDLDYYCSDNLPVELLPDFVKSRLRGNPIGDQRLAVGIDVRSRSDLTQLAQWRQAAQEYGIEARLLFFEASDEALIKRYADTRRRHPLSHLGLALPEAITRERQLTEPLRTQADAVIDTSTLNVHQLRRRVVTEFALGSHDRLSLLFESFAYKRGVPAEADFVFDARVLPNPHWDPELRPLTGRDAGVRDYLDNEADVQRYSAQIVDLLDTWLPRLRNDTRSYVTIAFGCTGGKHRSVYMAERMARHAREQGWPEVATFHREQD.

Position 5–12 (5–12) interacts with ATP; the sequence is GLSGSGKS. Position 57-60 (57-60) interacts with GTP; that stretch reads DVRS.

This sequence belongs to the RapZ-like family.

In terms of biological role, displays ATPase and GTPase activities. This is Nucleotide-binding protein XCV3122 from Xanthomonas euvesicatoria pv. vesicatoria (strain 85-10) (Xanthomonas campestris pv. vesicatoria).